A 93-amino-acid polypeptide reads, in one-letter code: Chromosomal protein MC1 (93 aa).

The disordered stretch occupies residues 1–43; the sequence is SNTRNFVLRDEEGNEHGVFTGKQPRQAALKAANRGDGTKSNPD.

Protects DNA against thermal denaturation and modulates transcription. This Methanosarcina barkeri protein is Chromosomal protein MC1.